We begin with the raw amino-acid sequence, 291 residues long: Small ribosomal subunit biogenesis GTPase RsgA 1 (291 aa).

Residues 63 to 221 (ENALVRPPVA…VADTPGFSSI (159 aa)) form the CP-type G domain. Residues 112–115 (SKMD) and 164–172 (GQSGVGKST) contribute to the GTP site. The Zn(2+) site is built by C245, C250, H252, and C258.

Belongs to the TRAFAC class YlqF/YawG GTPase family. RsgA subfamily. As to quaternary structure, monomer. Associates with 30S ribosomal subunit, binds 16S rRNA. Zn(2+) is required as a cofactor.

It is found in the cytoplasm. One of several proteins that assist in the late maturation steps of the functional core of the 30S ribosomal subunit. Helps release RbfA from mature subunits. May play a role in the assembly of ribosomal proteins into the subunit. Circularly permuted GTPase that catalyzes slow GTP hydrolysis, GTPase activity is stimulated by the 30S ribosomal subunit. The protein is Small ribosomal subunit biogenesis GTPase RsgA 1 of Listeria monocytogenes serotype 4b (strain F2365).